A 323-amino-acid polypeptide reads, in one-letter code: Cell division protein ZipA (323 aa).

Topologically, residues 1–5 (MQELR) are periplasmic. A helical transmembrane segment spans residues 6-26 (FVLIVVGALAIAALLFHGLWT). Over 27–323 (SKKEGKAKFG…QIVEFNAANA (297 aa)) the chain is Cytoplasmic. The disordered stretch occupies residues 35 to 92 (FGNKPLGKLDVDQEDKDTPGQERDFAPDPEDDFEIIRKDRKEPDFGMENSFDNKFSSD). Basic and acidic residues-rich tracts occupy residues 41–60 (GKLD…RDFA) and 68–78 (EIIRKDRKEPD).

Belongs to the ZipA family. As to quaternary structure, interacts with FtsZ via their C-terminal domains.

The protein localises to the cell inner membrane. Functionally, essential cell division protein that stabilizes the FtsZ protofilaments by cross-linking them and that serves as a cytoplasmic membrane anchor for the Z ring. Also required for the recruitment to the septal ring of downstream cell division proteins. The polypeptide is Cell division protein ZipA (Vibrio campbellii (strain ATCC BAA-1116)).